A 248-amino-acid polypeptide reads, in one-letter code: Protein PARTING DANCERS homolog (248 aa).

The span at 1–10 (MERSTHSTGW) shows a compositional bias: polar residues. Residues 1–25 (MERSTHSTGWTCLPPPPPEPAAPGR) form a disordered region.

The protein belongs to the ERCC1/RAD10/SWI10 family. Interacts with SHOC1 (via C-terminus). Interacts with HEI10. Highly expressed in anthers and pistil during meiosis. Expressed in pollen mother cells (PMCs) during meiosis. Expressed at low levels in roots, shoots, leaves, flowers, and glumes.

It is found in the chromosome. It localises to the nucleus. The protein resides in the cytoplasm. Its subcellular location is the cell membrane. Functionally, essential for normal crossover (CO) formation during meiosis. Essential component for the formation of class I meiotic COs. Interacts with SHOC1, another meiotic component, to regulate CO formation, possibly by stabilizing the recombination intermediates during meiosis. PTD and SHOC1 may form transient heterotrimeric or heterotetrameric complexes with HEI10 and/or ZIP4 to promote class I COs formation. Does not seem to be involved in early meiotic recombination steps involving double-strand break (DSB) formation, processing, and single-strand invasion. Does not seem to be involved in homologous pairing or synaptonemal complex (SC) assembly. This is Protein PARTING DANCERS homolog from Oryza sativa subsp. japonica (Rice).